Consider the following 324-residue polypeptide: Beta-ketoacyl-[acyl-carrier-protein] synthase III (324 aa).

Catalysis depends on residues C112 and H250. Positions Q251 to R255 are ACP-binding. N280 is a catalytic residue.

This sequence belongs to the thiolase-like superfamily. FabH family. As to quaternary structure, homodimer.

Its subcellular location is the cytoplasm. The catalysed reaction is malonyl-[ACP] + acetyl-CoA + H(+) = 3-oxobutanoyl-[ACP] + CO2 + CoA. The protein operates within lipid metabolism; fatty acid biosynthesis. Catalyzes the condensation reaction of fatty acid synthesis by the addition to an acyl acceptor of two carbons from malonyl-ACP. Catalyzes the first condensation reaction which initiates fatty acid synthesis and may therefore play a role in governing the total rate of fatty acid production. Possesses both acetoacetyl-ACP synthase and acetyl transacylase activities. Its substrate specificity determines the biosynthesis of branched-chain and/or straight-chain of fatty acids. In Clostridium novyi (strain NT), this protein is Beta-ketoacyl-[acyl-carrier-protein] synthase III.